Here is a 513-residue protein sequence, read N- to C-terminus: Interferon-induced, double-stranded RNA-activated protein kinase (513 aa).

Position 2 is an N-acetylalanine (Ala-2). Residues 8 to 76 form the DRBM 1 domain; the sequence is FYVDKLNKYS…AKLAVEILDN (69 aa). A Glycyl lysine isopeptide (Lys-Gly) (interchain with G-Cter in ISG15) cross-link involves residue Lys-68. Ser-82 is subject to Phosphoserine. A Phosphothreonine modification is found at Thr-84. Positions 95–162 constitute a DRBM 2 domain; the sequence is NYIGLVNSFA…AKNAYQKLSE (68 aa). Residue Tyr-96 is modified to Phosphotyrosine; by autocatalysis. Lys-154 participates in a covalent cross-link: Glycyl lysine isopeptide (Lys-Gly) (interchain with G-Cter in ISG15). Tyr-157 carries the post-translational modification Phosphotyrosine; by autocatalysis. Phosphothreonine is present on Thr-227. Residues 235–513 are interaction with TRAF5; it reads DFEDIEEIGS…ISEKKKRNTC (279 aa). In terms of domain architecture, Protein kinase spans 236–502; the sequence is FEDIEEIGSG…EILKTLAEWK (267 aa). 242-250 provides a ligand contact to ATP; it reads IGSGGFGQV. The residue at position 262 (Tyr-262) is a Phosphotyrosine; by autocatalysis. Lys-265 lines the ATP pocket. Asp-373 serves as the catalytic Proton acceptor. A phosphothreonine; by autocatalysis mark is found at Thr-406 and Thr-411. A Phosphoserine modification is found at Ser-416.

The protein belongs to the protein kinase superfamily. Ser/Thr protein kinase family. GCN2 subfamily. Homodimer. Interacts with DNAJC3. Interacts with STRBP. Forms a complex with FANCA, FANCC, FANCG and HSP70. Interacts with ADAR/ADAR1. The inactive form interacts with NCK1 and GSN. Interacts (via the kinase catalytic domain) with STAT3 (via SH2 domain), TRAF2 (C-terminus), TRAF5 (C-terminus) and TRAF6 (C-terminus). Interacts with MAP2K6, IKBKB/IKKB, IRS1, NPM1, TARBP2, NLRP1, NLRP3, NLRC4 and AIM2. Interacts (via DRBM 1 domain) with DUS2L (via DRBM domain). Interacts with DHX9 (via N-terminus) and this interaction is dependent upon activation of the kinase. Post-translationally, autophosphorylated on several Ser, Thr and Tyr residues. Autophosphorylation of Thr-411 is dependent on Thr-406 and is stimulated by dsRNA binding and dimerization. Autophosphorylation apparently leads to the activation of the kinase. Tyrosine autophosphorylation is essential for efficient dsRNA-binding, dimerization, and kinase activation.

Its subcellular location is the cytoplasm. It localises to the nucleus. The protein resides in the perinuclear region. It carries out the reaction L-seryl-[protein] + ATP = O-phospho-L-seryl-[protein] + ADP + H(+). The enzyme catalyses L-threonyl-[protein] + ATP = O-phospho-L-threonyl-[protein] + ADP + H(+). It catalyses the reaction L-tyrosyl-[protein] + ATP = O-phospho-L-tyrosyl-[protein] + ADP + H(+). Initially produced in an inactive form and is activated by binding to viral dsRNA, which causes dimerization and autophosphorylation in the activation loop and stimulation of function. ISGylation can activate it in the absence of viral infection. Can also be activated by heparin, pro-inflammatory stimuli, growth factors, cytokines, oxidative stress and the cellular protein PRKRA. Activity is markedly stimulated by manganese ions. Activation is blocked by the cellular proteins TARBP2, DUS2L, NPM1, NCK1 and ADAR. In terms of biological role, IFN-induced dsRNA-dependent serine/threonine-protein kinase that phosphorylates the alpha subunit of eukaryotic translation initiation factor 2 (EIF2S1/eIF-2-alpha) and plays a key role in the innate immune response to viral infection. Inhibits viral replication via the integrated stress response (ISR): EIF2S1/eIF-2-alpha phosphorylation in response to viral infection converts EIF2S1/eIF-2-alpha in a global protein synthesis inhibitor, resulting to a shutdown of cellular and viral protein synthesis, while concomitantly initiating the preferential translation of ISR-specific mRNAs, such as the transcriptional activator ATF4. Exerts its antiviral activity on a wide range of DNA and RNA viruses. Also involved in the regulation of signal transduction, apoptosis, cell proliferation and differentiation: phosphorylates other substrates including p53/TP53, PPP2R5A, DHX9, ILF3 and IRS1. In addition to serine/threonine-protein kinase activity, also has tyrosine-protein kinase activity and phosphorylates CDK1 at 'Tyr-4' upon DNA damage, facilitating its ubiquitination and proteasomal degradation. Either as an adapter protein and/or via its kinase activity, can regulate various signaling pathways (p38 MAP kinase, NF-kappa-B and insulin signaling pathways) and transcription factors (JUN, STAT1, STAT3, IRF1, ATF3) involved in the expression of genes encoding pro-inflammatory cytokines and IFNs. Activates the NF-kappa-B pathway via interaction with IKBKB and TRAF family of proteins and activates the p38 MAP kinase pathway via interaction with MAP2K6. Can act as both a positive and negative regulator of the insulin signaling pathway (ISP). Negatively regulates ISP by inducing the inhibitory phosphorylation of insulin receptor substrate 1 (IRS1) at 'Ser-312' and positively regulates ISP via phosphorylation of PPP2R5A which activates FOXO1, which in turn up-regulates the expression of insulin receptor substrate 2 (IRS2). Can regulate NLRP3 inflammasome assembly and the activation of NLRP3, NLRP1, AIM2 and NLRC4 inflammasomes. Plays a role in the regulation of the cytoskeleton by binding to gelsolin (GSN), sequestering the protein in an inactive conformation away from actin. The sequence is that of Interferon-induced, double-stranded RNA-activated protein kinase (Eif2ak2) from Rattus norvegicus (Rat).